Consider the following 250-residue polypeptide: Pyrroloquinoline-quinone synthase (250 aa).

It belongs to the PqqC family.

It catalyses the reaction 6-(2-amino-2-carboxyethyl)-7,8-dioxo-1,2,3,4,7,8-hexahydroquinoline-2,4-dicarboxylate + 3 O2 = pyrroloquinoline quinone + 2 H2O2 + 2 H2O + H(+). It participates in cofactor biosynthesis; pyrroloquinoline quinone biosynthesis. Functionally, ring cyclization and eight-electron oxidation of 3a-(2-amino-2-carboxyethyl)-4,5-dioxo-4,5,6,7,8,9-hexahydroquinoline-7,9-dicarboxylic-acid to PQQ. The protein is Pyrroloquinoline-quinone synthase of Xanthomonas campestris pv. campestris (strain B100).